A 417-amino-acid polypeptide reads, in one-letter code: MFDESYSIKNFDDVLFKAISDEKRRQEEHIELIASENYVSPRVLEAQGSVLTNKYAEGYPGKRYYGGCEFVDVAEELAISRAKLLFGAHYVNVQPHSGSQANAAVMMALLSPGDTFMGMALPHGGHLTHGSKVNFSGKLYHSVEYGVDSNTGLIDYDALEKLALQHKPKLIIAGFSAYSRILDWARFREIADKVGAYLMADIAHVAGLVAVGLYPSPVPYADVVTTTTHKTLRGPRGGLILCKENEEIEKKLNSSVFPGMQGGPLMHVIAAKAVAFAEALLPEFKTYQQQVLANARTMCSVLQSRGYDIVSGGTDNHLLLVDLINKGITGKEADAAVGRANITVNKNSVPNDPRSPFVTSGLRLGTPAATTRGFKEREITLLSNWVADVLDNVHDETNISRVKTQVLLLCREFPVYA.

(6S)-5,6,7,8-tetrahydrofolate is bound by residues L121 and 125–127 (GHL). K230 bears the N6-(pyridoxal phosphate)lysine mark. 355–357 (SPF) is a (6S)-5,6,7,8-tetrahydrofolate binding site.

The protein belongs to the SHMT family. In terms of assembly, homodimer. Requires pyridoxal 5'-phosphate as cofactor.

It localises to the cytoplasm. It catalyses the reaction (6R)-5,10-methylene-5,6,7,8-tetrahydrofolate + glycine + H2O = (6S)-5,6,7,8-tetrahydrofolate + L-serine. It functions in the pathway one-carbon metabolism; tetrahydrofolate interconversion. Its pathway is amino-acid biosynthesis; glycine biosynthesis; glycine from L-serine: step 1/1. In terms of biological role, catalyzes the reversible interconversion of serine and glycine with tetrahydrofolate (THF) serving as the one-carbon carrier. This reaction serves as the major source of one-carbon groups required for the biosynthesis of purines, thymidylate, methionine, and other important biomolecules. Also exhibits THF-independent aldolase activity toward beta-hydroxyamino acids, producing glycine and aldehydes, via a retro-aldol mechanism. This is Serine hydroxymethyltransferase from Legionella pneumophila subsp. pneumophila (strain Philadelphia 1 / ATCC 33152 / DSM 7513).